The following is a 240-amino-acid chain: MDLHLIFGPTCTGKTTTAIALAQQTGLPVLSLDRVQCCPQLSTGSGRPTVEELKGTTRLYLDDRPLVEGIIAAKQAHHRLIEEVYNHEANGGLILEGGSTSLLNCMARNSYWSADFRWHIIRHKLPDQETFMKAAKARVKQMLHPAAGHSIIQELVYLWNEPRLRPILKEIDGYRYAMLFASQNQITADMLLQLDANMEGKLINGIAQEYFIHARQQEQKFPQVNAAAFDGFEGHPFGMY.

Belongs to the isopentenyl transferase family.

The catalysed reaction is dimethylallyl diphosphate + AMP = N(6)-(dimethylallyl)adenosine 5'-phosphate + diphosphate. Transfers dimethylallyl groups to AMP as part of the biosynthesis of cytokinin phytohormones. This is Adenylate dimethylallyltransferase (izt) from Agrobacterium tumefaciens (strain Ach5).